We begin with the raw amino-acid sequence, 495 residues long: UDP-glycosyltransferase 73C25 (495 aa).

23-26 (GHMI) lines the UDP-alpha-D-glucose pocket. Catalysis depends on His24, which acts as the Proton acceptor. The Charge relay role is filled by Asp129. UDP-alpha-D-glucose-binding positions include 355–358 (WSPQ), 373–381 (HCGWNSTLE), and 397–398 (DQ).

It belongs to the UDP-glycosyltransferase family.

Functionally, catalyzes the transfer of a glucose (Glc) moiety from UDP-Glc to the C-28 carboxylic group of oleanolate 3-O-beta-D-glucoside to form oleanolate 3,28-O-beta-D-diglucoside. The chain is UDP-glycosyltransferase 73C25 from Barbarea vulgaris (Yellow rocket).